The following is a 1500-amino-acid chain: DNA-directed RNA polymerase subunit beta' (1500 aa).

Positions 60, 62, 75, and 78 each coordinate Zn(2+). Residues 180 to 199 are disordered; it reads DLGGMETAQRSTQRQIEEDY. 3 residues coordinate Mg(2+): Asp-626, Asp-628, and Asp-630. Positions 1002, 1075, 1082, and 1085 each coordinate Zn(2+). The tract at residues 1440 to 1500 is disordered; the sequence is EVQQAEKSAE…DSDHPDLSSL (61 aa). Polar residues predominate over residues 1449–1468; sequence EPTTTALPTTNGHQAPQSDT.

This sequence belongs to the RNA polymerase beta' chain family. The RNAP catalytic core consists of 2 alpha, 1 beta, 1 beta' and 1 omega subunit. When a sigma factor is associated with the core the holoenzyme is formed, which can initiate transcription. It depends on Mg(2+) as a cofactor. Zn(2+) is required as a cofactor.

The enzyme catalyses RNA(n) + a ribonucleoside 5'-triphosphate = RNA(n+1) + diphosphate. In terms of biological role, DNA-dependent RNA polymerase catalyzes the transcription of DNA into RNA using the four ribonucleoside triphosphates as substrates. This chain is DNA-directed RNA polymerase subunit beta', found in Chloroflexus aggregans (strain MD-66 / DSM 9485).